Reading from the N-terminus, the 202-residue chain is Superoxide dismutase [Mn/Fe] (202 aa).

Fe(3+) is bound by residues His-27, His-81, Asp-163, and His-167. Mn(2+) contacts are provided by His-27, His-81, Asp-163, and His-167.

This sequence belongs to the iron/manganese superoxide dismutase family. Mn(2+) is required as a cofactor. It depends on Fe(3+) as a cofactor.

The catalysed reaction is 2 superoxide + 2 H(+) = H2O2 + O2. In terms of biological role, destroys superoxide anion radicals which are normally produced within the cells and which are toxic to biological systems. Catalyzes the dismutation of superoxide anion radicals into O2 and H2O2 by successive reduction and oxidation of the transition metal ion at the active site. The protein is Superoxide dismutase [Mn/Fe] (sodA) of Streptococcus agalactiae serotype V (strain ATCC BAA-611 / 2603 V/R).